The sequence spans 137 residues: uncharacterized protein (137 aa).

The N-terminal stretch at 1–19 (MVAFYGIFLFGTVYLFGLA) is a signal peptide.

This is an uncharacterized protein from Acanthamoeba polyphaga (Amoeba).